Here is a 234-residue protein sequence, read N- to C-terminus: 2-phospho-L-lactate guanylyltransferase (234 aa).

Belongs to the CofC family. In terms of assembly, homodimer.

It carries out the reaction (2S)-2-phospholactate + GTP + H(+) = (2S)-lactyl-2-diphospho-5'-guanosine + diphosphate. The protein operates within cofactor biosynthesis; coenzyme F420 biosynthesis. Functionally, guanylyltransferase that catalyzes the activation of (2S)-2-phospholactate (2-PL) as (2S)-lactyl-2-diphospho-5'-guanosine, via the condensation of 2-PL with GTP. It is involved in the biosynthesis of coenzyme F420, a hydride carrier cofactor. This is 2-phospho-L-lactate guanylyltransferase from Methanobrevibacter ruminantium (strain ATCC 35063 / DSM 1093 / JCM 13430 / OCM 146 / M1) (Methanobacterium ruminantium).